A 330-amino-acid polypeptide reads, in one-letter code: Small ribosomal subunit protein uS2 (330 aa).

It belongs to the universal ribosomal protein uS2 family.

The protein is Small ribosomal subunit protein uS2 of Bradyrhizobium sp. (strain BTAi1 / ATCC BAA-1182).